A 529-amino-acid polypeptide reads, in one-letter code: DEP domain-containing protein 1B (529 aa).

The region spanning 24–108 is the DEP domain; it reads FRAKMPLRKH…DNRHLYRFPP (85 aa). Serine 160 bears the Phosphoserine mark. A Rho-GAP domain is found at 201-393; it reads DSLEEVLDVK…FLMDNYQEIL (193 aa). Serine 436 bears the Phosphoserine mark.

In Homo sapiens (Human), this protein is DEP domain-containing protein 1B (DEPDC1B).